Reading from the N-terminus, the 447-residue chain is MREIVHLQTGQCGNQIGAAFWQTISGEHGLDGSGVYNGTSDLQLERMNVYFNEASGNKYVPRAVLVDLEPGTMDAVRAGPFGQLFRPDNFVFGQSGAGNNWAKGHYTEGAELVDQVLDVVRREAEGCDCLQGFQITHSLGGGTGAGMGTLLISKIREEFPDRMMATFSVVPSPKVSDTVVEPYNATLSVHQLVENSDETFCIDNEALYDICMRTLKLSNPSYGDLNHLVSAVMSGVTTCLRFPGQLNSDLRKLAVNMVPFPRLHFFMVGFAPLTSRGAHSFRAVTVPELTQQMYDPKNMMAASDFRNGRYLTCSAIFRGKVSMKEVEDQMRNVQNKNSSYFVEWIPNNVQTALCSIPPRGLKMSSTFVGNSTSIQELFKRVGDQFTAMFRRKAFLHWYTGEGMDEMEFTEAESNMNDLVSEYQQYQDASISEGEEEYEEEVPIEGEE.

GTP-binding residues include Q11, E69, S138, G142, T143, G144, N204, and N226. Position 69 (E69) interacts with Mg(2+). Residues 425-447 (YQDASISEGEEEYEEEVPIEGEE) form a disordered region. Positions 432 to 447 (EGEEEYEEEVPIEGEE) are enriched in acidic residues.

Belongs to the tubulin family. Dimer of alpha and beta chains. A typical microtubule is a hollow water-filled tube with an outer diameter of 25 nm and an inner diameter of 15 nM. Alpha-beta heterodimers associate head-to-tail to form protofilaments running lengthwise along the microtubule wall with the beta-tubulin subunit facing the microtubule plus end conferring a structural polarity. Microtubules usually have 13 protofilaments but different protofilament numbers can be found in some organisms and specialized cells. The cofactor is Mg(2+).

The protein resides in the cytoplasm. Its subcellular location is the cytoskeleton. Its function is as follows. Tubulin is the major constituent of microtubules, a cylinder consisting of laterally associated linear protofilaments composed of alpha- and beta-tubulin heterodimers. Microtubules grow by the addition of GTP-tubulin dimers to the microtubule end, where a stabilizing cap forms. Below the cap, tubulin dimers are in GDP-bound state, owing to GTPase activity of alpha-tubulin. The chain is Tubulin beta chain (tubA) from Botryotinia fuckeliana (Noble rot fungus).